The sequence spans 122 residues: MDGLNTGEEEDSAFTSISLTDDTDHSLKSLHSGAERLFPKMMNADMDAVDAENQVELEEKTRLINQVLELQHTLEDLSARVDAVKEENLKLKSENQVLGQYIENLMSASSVFQTTDTKSKRK.

The interval 1 to 26 (MDGLNTGEEEDSAFTSISLTDDTDHS) is disordered. Residues 43 to 101 (NADMDAVDAENQVELEEKTRLINQVLELQHTLEDLSARVDAVKEENLKLKSENQVLGQY) adopt a coiled-coil conformation.

This sequence belongs to the SCOC family. As to quaternary structure, homodimer. Interacts with ARL1, ARL2 and ARL3. Directly interacts with FEZ1 and UVRAG. The interaction with UVRAG is reduced by amino acid starvation, but the complex is stabilized in the presence of FEZ1. Interacts with NRBF2.

It localises to the golgi apparatus membrane. The protein localises to the golgi apparatus. Its subcellular location is the trans-Golgi network. It is found in the cytoplasm. The protein resides in the cytosol. Functionally, positive regulator of amino acid starvation-induced autophagy. In Rattus norvegicus (Rat), this protein is Short coiled-coil protein (Scoc).